Reading from the N-terminus, the 239-residue chain is MQGLAGSVRVAALDIDGTLTERRGAARLDGCSIAVARLLNDLGVTSILMTGNSLPVARGVAVYLGLEGPVVAENGCVAVVGGERVHICSGRPPEGLVKRIMELGFKPSWQNEYRYHEYSLIPVKAAPGIVERASAIAEEEGYRAIWSGYALHIQPPGGGKARGVGEVLARIGAGWSEVLAIGDGENDVEVLARAGYSGAPGDAAEQAKRAAKIVARSPGARGTLEIIQRVLGGARAPAC.

The active-site Nucleophile is aspartate 14. Residues aspartate 14 and aspartate 16 each contribute to the Mg(2+) site. Lysine 160 contributes to the substrate binding site. The Mg(2+) site is built by aspartate 183 and aspartate 187.

This sequence belongs to the archaeal SPP-like hydrolase family. Mg(2+) serves as cofactor.

It catalyses the reaction 2-phosphoglycolate + H2O = glycolate + phosphate. Catalyzes the dephosphorylation of 2-phosphoglycolate. The chain is Phosphoglycolate phosphatase from Aeropyrum pernix (strain ATCC 700893 / DSM 11879 / JCM 9820 / NBRC 100138 / K1).